Here is a 699-residue protein sequence, read N- to C-terminus: D-(-)-3-hydroxybutyrate oligomer hydrolase (699 aa).

The N-terminal stretch at 1-33 is a signal peptide; that stretch reads MTAIRGGSRRAPGLALALLGGVLLGACHGDENA. The active-site Charge relay system is S311.

This sequence belongs to the D-(-)-3-hydroxybutyrate oligomer hydrolase family.

The protein resides in the secreted. It carries out the reaction (3R)-hydroxybutanoate dimer + H2O = 2 (R)-3-hydroxybutanoate + H(+). Its pathway is lipid metabolism; butanoate metabolism. In terms of biological role, participates in the degradation of poly-3-hydroxybutyrate (PHB). It works downstream of poly(3-hydroxybutyrate) depolymerase, hydrolyzing D(-)-3-hydroxybutyrate oligomers of various length (3HB-oligomers) into 3HB-monomers. The polypeptide is D-(-)-3-hydroxybutyrate oligomer hydrolase (Burkholderia mallei (strain NCTC 10247)).